The chain runs to 144 residues: Large ribosomal subunit protein uL15 (144 aa).

Positions 1–52 (MKLHTLKSTPGARVEKHRVGRGHAAGKGKQAGKGQSGQNKRHGHRLGFEGGQ) are disordered. A compositionally biased stretch (basic residues) spans 15 to 26 (EKHRVGRGHAAG).

Belongs to the universal ribosomal protein uL15 family. In terms of assembly, part of the 50S ribosomal subunit.

Its function is as follows. Binds to the 23S rRNA. The protein is Large ribosomal subunit protein uL15 of Mycoplasmopsis agalactiae (strain NCTC 10123 / CIP 59.7 / PG2) (Mycoplasma agalactiae).